Here is a 476-residue protein sequence, read N- to C-terminus: Trigger factor (476 aa).

The PPIase FKBP-type domain occupies 169-254 (GDKVTLDYVG…VKEVAAAEEL (86 aa)). The segment at 437-476 (SRDELLAEDEAEGEEKKAAGETKKKAAPKKKAAKKESAAE) is disordered. Residues 450–460 (EEKKAAGETKK) are compositionally biased toward basic and acidic residues.

It belongs to the FKBP-type PPIase family. Tig subfamily.

It is found in the cytoplasm. It carries out the reaction [protein]-peptidylproline (omega=180) = [protein]-peptidylproline (omega=0). Functionally, involved in protein export. Acts as a chaperone by maintaining the newly synthesized protein in an open conformation. Functions as a peptidyl-prolyl cis-trans isomerase. This is Trigger factor from Chelativorans sp. (strain BNC1).